A 141-amino-acid polypeptide reads, in one-letter code: ATP synthase epsilon chain (141 aa).

The protein belongs to the ATPase epsilon chain family. As to quaternary structure, F-type ATPases have 2 components, CF(1) - the catalytic core - and CF(0) - the membrane proton channel. CF(1) has five subunits: alpha(3), beta(3), gamma(1), delta(1), epsilon(1). CF(0) has three main subunits: a, b and c.

The protein resides in the cell inner membrane. In terms of biological role, produces ATP from ADP in the presence of a proton gradient across the membrane. The protein is ATP synthase epsilon chain of Pseudomonas fluorescens (strain Pf0-1).